Consider the following 166-residue polypeptide: Protein-export protein SecB (166 aa).

The protein belongs to the SecB family. In terms of assembly, homotetramer, a dimer of dimers. One homotetramer interacts with 1 SecA dimer.

Its subcellular location is the cytoplasm. Its function is as follows. One of the proteins required for the normal export of preproteins out of the cell cytoplasm. It is a molecular chaperone that binds to a subset of precursor proteins, maintaining them in a translocation-competent state. It also specifically binds to its receptor SecA. This chain is Protein-export protein SecB, found in Cereibacter sphaeroides (strain ATCC 17025 / ATH 2.4.3) (Rhodobacter sphaeroides).